Here is a 344-residue protein sequence, read N- to C-terminus: N-acetyl-gamma-glutamyl-phosphate reductase (344 aa).

C148 is an active-site residue.

It belongs to the NAGSA dehydrogenase family. Type 1 subfamily.

The protein resides in the cytoplasm. It carries out the reaction N-acetyl-L-glutamate 5-semialdehyde + phosphate + NADP(+) = N-acetyl-L-glutamyl 5-phosphate + NADPH + H(+). It participates in amino-acid biosynthesis; L-arginine biosynthesis; N(2)-acetyl-L-ornithine from L-glutamate: step 3/4. Catalyzes the NADPH-dependent reduction of N-acetyl-5-glutamyl phosphate to yield N-acetyl-L-glutamate 5-semialdehyde. The chain is N-acetyl-gamma-glutamyl-phosphate reductase from Clostridium beijerinckii (strain ATCC 51743 / NCIMB 8052) (Clostridium acetobutylicum).